The primary structure comprises 849 residues: Serrate RNA effector molecule homolog A (849 aa).

Disordered stretches follow at residues 1-90 (MADS…HGSD) and 276-409 (KREA…PRPL). Composition is skewed to basic and acidic residues over residues 8–73 (YDRR…RHDL), 276–306 (KREA…KPEN), and 314–342 (EKPV…ETRK). A compositionally biased stretch (acidic residues) spans 354-364 (SDDGSDSESDT). The segment covering 381–405 (RAEETPKKEEDTEKQKEKQKEDTVK) has biased composition (basic and acidic residues).

The protein belongs to the ARS2 family. Interacts ncbp1/cbp80.

It is found in the nucleus. Its subcellular location is the nucleoplasm. It localises to the cytoplasm. Functionally, acts as a mediator between the cap-binding complex (CBC) and the primary microRNAs (miRNAs) processing machinery during cell proliferation. Contributes to the stability and delivery of capped primary miRNA transcripts to the primary miRNA processing complex, thereby playing a role in RNA-mediated gene silencing (RNAi) by miRNAs. In Xenopus laevis (African clawed frog), this protein is Serrate RNA effector molecule homolog A (srrt-a).